The sequence spans 260 residues: Thiazole synthase (260 aa).

The active-site Schiff-base intermediate with DXP is the Lys-96. 1-deoxy-D-xylulose 5-phosphate-binding positions include Gly-157, 184-185 (AG), and 206-207 (NT).

The protein belongs to the ThiG family. In terms of assembly, homotetramer. Forms heterodimers with either ThiH or ThiS.

Its subcellular location is the cytoplasm. It catalyses the reaction [ThiS sulfur-carrier protein]-C-terminal-Gly-aminoethanethioate + 2-iminoacetate + 1-deoxy-D-xylulose 5-phosphate = [ThiS sulfur-carrier protein]-C-terminal Gly-Gly + 2-[(2R,5Z)-2-carboxy-4-methylthiazol-5(2H)-ylidene]ethyl phosphate + 2 H2O + H(+). It participates in cofactor biosynthesis; thiamine diphosphate biosynthesis. Functionally, catalyzes the rearrangement of 1-deoxy-D-xylulose 5-phosphate (DXP) to produce the thiazole phosphate moiety of thiamine. Sulfur is provided by the thiocarboxylate moiety of the carrier protein ThiS. In vitro, sulfur can be provided by H(2)S. The chain is Thiazole synthase from Bradyrhizobium sp. (strain BTAi1 / ATCC BAA-1182).